The primary structure comprises 451 residues: Glycylpeptide N-tetradecanoyltransferase (451 aa).

Residues 34-37, 167-169, and 175-179 contribute to the tetradecanoyl-CoA site; these read YKFW, LCV, and SKRLT. The active-site Proton acceptor; via carboxylate is Leu-451.

The protein belongs to the NMT family. Monomer.

It is found in the cytoplasm. It carries out the reaction N-terminal glycyl-[protein] + tetradecanoyl-CoA = N-tetradecanoylglycyl-[protein] + CoA + H(+). Functionally, adds a myristoyl group to the N-terminal glycine residue of certain cellular proteins. This chain is Glycylpeptide N-tetradecanoyltransferase (NMT1), found in Candida glabrata (strain ATCC 2001 / BCRC 20586 / JCM 3761 / NBRC 0622 / NRRL Y-65 / CBS 138) (Yeast).